The chain runs to 310 residues: Ribosomal RNA small subunit methyltransferase H (310 aa).

Residues 32-34 (GGH), Asp-52, Phe-79, Asp-100, and Gln-107 each bind S-adenosyl-L-methionine.

It belongs to the methyltransferase superfamily. RsmH family.

It localises to the cytoplasm. It catalyses the reaction cytidine(1402) in 16S rRNA + S-adenosyl-L-methionine = N(4)-methylcytidine(1402) in 16S rRNA + S-adenosyl-L-homocysteine + H(+). Specifically methylates the N4 position of cytidine in position 1402 (C1402) of 16S rRNA. This is Ribosomal RNA small subunit methyltransferase H from Geobacillus thermodenitrificans (strain NG80-2).